Reading from the N-terminus, the 685-residue chain is MSIVTVPSATSKVQQIKTLISVACTVNHLKQIHVSLINHHLHHDTFLVNLLLKRTLFFRQTKYSYLLFSHTQFPNIFLYNSLINGFVNNHLFHETLDLFLSIRKHGLYLHGFTFPLVLKACTRASSRKLGIDLHSLVVKCGFNHDVAAMTSLLSIYSGSGRLNDAHKLFDEIPDRSVVTWTALFSGYTTSGRHREAIDLFKKMVEMGVKPDSYFIVQVLSACVHVGDLDSGEWIVKYMEEMEMQKNSFVRTTLVNLYAKCGKMEKARSVFDSMVEKDIVTWSTMIQGYASNSFPKEGIELFLQMLQENLKPDQFSIVGFLSSCASLGALDLGEWGISLIDRHEFLTNLFMANALIDMYAKCGAMARGFEVFKEMKEKDIVIMNAAISGLAKNGHVKLSFAVFGQTEKLGISPDGSTFLGLLCGCVHAGLIQDGLRFFNAISCVYALKRTVEHYGCMVDLWGRAGMLDDAYRLICDMPMRPNAIVWGALLSGCRLVKDTQLAETVLKELIALEPWNAGNYVQLSNIYSVGGRWDEAAEVRDMMNKKGMKKIPGYSWIELEGKVHEFLADDKSHPLSDKIYAKLEDLGNEMRLMGFVPTTEFVFFDVEEEEKERVLGYHSEKLAVALGLISTDHGQVIRVVKNLRVCGDCHEVMKLISKITRREIVVRDNNRFHCFTNGSCSCNDYW.

12 PPR repeats span residues 75–109 (NIFL…GLYL), 110–144 (HGFT…GFNH), 145–175 (DVAA…IPDR), 176–210 (SVVT…GVKP), 211–245 (DSYF…EMQK), 246–276 (NSFV…MVEK), 277–311 (DIVT…NLKP), 312–346 (DQFS…EFLT), 347–381 (NLFM…DIVI), 383–412 (NAAI…GISP), 413–443 (DGST…ISCV), and 449–479 (TVEH…MPMR). Positions 484–559 (VWGALLSGCR…IPGYSWIELE (76 aa)) are type E motif. Residues 560–590 (GKVHEFLADDKSHPLSDKIYAKLEDLGNEMR) form a type E(+) motif region. The type DYW motif stretch occupies residues 591–685 (LMGFVPTTEF…NGSCSCNDYW (95 aa)).

Belongs to the PPR family. PCMP-H subfamily.

The protein is Putative pentatricopeptide repeat-containing protein At3g08820 (PCMP-H84) of Arabidopsis thaliana (Mouse-ear cress).